A 150-amino-acid chain; its full sequence is UPF0178 protein Daro_2879 (150 aa).

The protein belongs to the UPF0178 family.

This Dechloromonas aromatica (strain RCB) protein is UPF0178 protein Daro_2879.